Reading from the N-terminus, the 258-residue chain is Peptidase inhibitor 15 (258 aa).

A signal peptide spans 1 to 21 (MIMNSAVSLVILLSLLCEAHT). The propeptide occupies 22 to 60 (VVLLNPTDSSLPANNFTDTEAALSTPLESADIPKARRKR). N-linked (GlcNAc...) asparagine glycans are attached at residues N36 and N124. One can recognise an SCP domain in the interval 71-211 (LDYHNQVRGK…RRAVYLVCNY (141 aa)).

Belongs to the CRISP family. In terms of processing, N-glycosylated. In terms of tissue distribution, weakly expressed. Expressed at low level in prostate, mammary gland, salivary gland and thyroid gland.

It is found in the secreted. In terms of biological role, serine protease inhibitor which displays weak inhibitory activity against trypsin. May play a role in facial patterning during embryonic development. In Mus musculus (Mouse), this protein is Peptidase inhibitor 15 (Pi15).